Reading from the N-terminus, the 1087-residue chain is MTTESGSDSESKPDQEAEPQEAAGAQGRAGAPVPEPPKEEQQQALEQFAAAAAHSTPVRREVTDKEQEFAARAAKQLEYQQLEDDKLSQKSSSSKLSRSPLKIVKKPKSMQCKVILLDGSEYTCDVEKRSRGQVLFDKVCEHLNLLEKDYFGLTYRDAENQKNWLDPAKEIKKQVRSGAWHFSFNVKFYPPDPAQLSEDITRYYLCLQLRDDIVSGRLPCSFVTLALLGSYTVQSELGDYDPDECGSDYISEFRFAPNHTKELEDKVIELHKSHRGMTPAEAEMHFLENAKKLSMYGVDLHHAKDSEGVEIMLGVCASGLLIYRDRLRINRFAWPKVLKISYKRNNFYIKIRPGEFEQFESTIGFKLPNHRAAKRLWKVCVEHHTFFRLLLPEAPPKKFLTLGSKFRYSGRTQAQTRRASALIDRPAPYFERSSSKRYTMSRSLDGEVGTGQYATTKGISQTNLITTVTPEKKAEEERDEEEDKRRKGEEVTPISAIRHEGKSPGLGTDSCPLSPPSTHCAPTSPTELRRRCKENDCKLPGYEPSRAEHLPGEPALDSDGPGRPYLGDQDVAFSYRQQTGKGTTLFSFSLQLPESFPSLLDDDGYLSFPNLSETNLLPQSLQHYLPIRSPSLVPCFLFIFFFLLSASFSVPYALTLSFPLALCLCYLEPKAASLSASLDNDPSDSSEEETDSERTDTAADGETTATESDQEEDAELKAQELEKTQDDLMKHQTNISELKRTFLETSTDTAVTNEWEKRLSTSPVRLAARQEDAPMIEPLVPEETKQSSGEKLMDGSEIFSLLESARKPTEFIGGVTSTSQSWVQKMETKTESSGIETEPTVHHLPLSTEKVVQETVLVEERRVVHASGDASYSAGDSGDAAAQPAFTGIKGKEGSALTEGAKEEGGEEVAKAVLEQEETAAASRERQEEQSAAIHISETLEQKPHFESSTVKTETISFGSVSPGGVKLEISTKEVPVVHTETKTITYESSQVDPGTDLEPGVLMSAQTITSETTSTTTTTHITKTVKGGISETRIEKRIVITGDADIDHDQALAQAIKEAKEQHPDMSVTKVVVHKETEITPEDGED.

Met1 carries the post-translational modification N-acetylmethionine. The tract at residues 1–43 is disordered; it reads MTTESGSDSESKPDQEAEPQEAAGAQGRAGAPVPEPPKEEQQQ. Thr2 bears the N-acetylthreonine; in Band 4.1-like protein 3, N-terminally processed mark. The span at 20–32 shows a compositional bias: low complexity; it reads QEAAGAQGRAGAP. Ser88 carries the phosphoserine modification. One can recognise an FERM domain in the interval 110-391; it reads MQCKVILLDG…EHHTFFRLLL (282 aa). The interval 394-513 is hydrophilic; the sequence is APPKKFLTLG…PGLGTDSCPL (120 aa). Phosphoserine occurs at positions 420, 443, and 460. Over residues 459 to 469 the composition is skewed to polar residues; it reads ISQTNLITTVT. Disordered stretches follow at residues 459 to 529, 541 to 563, 675 to 715, and 937 to 965; these read ISQT…TELR, GYEP…GPGR, SASL…EDAE, and SETL…SPGG. Residues Thr469 and Thr492 each carry the phosphothreonine modification. A spectrin--actin-binding region spans residues 514 to 860; that stretch reads SPPSTHCAPT…VVQETVLVEE (347 aa). The span at 516–526 shows a compositional bias: polar residues; sequence PSTHCAPTSPT. The segment covering 681–691 has biased composition (acidic residues); it reads DPSDSSEEETD. The segment covering 698-707 has biased composition (low complexity); the sequence is AADGETTATE. Thr706 carries the phosphothreonine modification. Phosphoserine occurs at positions 708, 960, and 962. Residues 861–1083 are C-terminal (CTD); sequence RRVVHASGDA…VHKETEITPE (223 aa). Polar residues predominate over residues 947 to 960; that stretch reads ESSTVKTETISFGS. Phosphothreonine is present on Thr1081.

In terms of assembly, interacts (via FERM domain) with CADM1. Interacts (via FERM domain) with PRMT3; the interaction is direct and inhibits the protein-arginine N-methyltransferase activity of PRMT3. Interacts with PRMT5. Interacts with PRMT6. In terms of tissue distribution, expressed at high levels in brain, with lower levels in kidney, intestine, and testis. Detected in lung.

The protein resides in the cytoplasm. The protein localises to the cytoskeleton. Its subcellular location is the cell junction. It localises to the cell membrane. In terms of biological role, tumor suppressor that inhibits cell proliferation and promotes apoptosis. Modulates the activity of protein arginine N-methyltransferases, including PRMT3 and PRMT5. This is Band 4.1-like protein 3 from Homo sapiens (Human).